We begin with the raw amino-acid sequence, 201 residues long: Ras-related protein Rab-9A (201 aa).

Position 2 is an N-acetylalanine (alanine 2). GDP is bound at residue glycine 17. GTP is bound by residues glycine 17, valine 18, glycine 19, lysine 20, serine 21, serine 22, threonine 34, histidine 38, and threonine 39. GDP-binding residues include glycine 19, lysine 20, serine 21, and serine 22. Position 21 (serine 21) interacts with Mg(2+). The short motif at 31–42 is the Switch 1 element; the sequence is KFDTQLFHTIGV. Mg(2+) contacts are provided by threonine 39 and aspartate 62. A Switch 2 motif is present at residues 64 to 78; the sequence is AGQERFRSLRTPFYR. GTP is bound by residues glycine 65, asparagine 124, lysine 125, and aspartate 127. Residues asparagine 124, lysine 125, aspartate 127, alanine 155, and lysine 156 each coordinate GDP. Position 156 (lysine 156) interacts with GTP. Serine 179 carries the post-translational modification Phosphoserine. A Phosphothreonine modification is found at threonine 187. Residues cysteine 200 and cysteine 201 are each lipidated (S-geranylgeranyl cysteine).

It belongs to the small GTPase superfamily. Rab family. As to quaternary structure, interacts (preferentially in its GTP-bound form) with GCC2 (via its GRIP domain). Interacts (GTP-bound form) with SGSM1; the GDP-bound form has much lower affinity for SGSM1. Interacts with SGSM2. The GTP-bound form but not the GDP-bound form interacts with HPS4 and the BLOC-3 complex (heterodimer of HPS1 and HPS4) but does not interact with HPS1 alone. Interacts (GTP-bound form) with NDE1; two RAB9A-GTP molecules lie on the opposite sides of the NDE1 homodimer; the interaction leads to RAB9A-dynein motor tethering. Interacts (GTP-bound form) with NDEL1. It depends on Mg(2+) as a cofactor.

Its subcellular location is the cell membrane. The protein resides in the endoplasmic reticulum membrane. The protein localises to the golgi apparatus membrane. It is found in the late endosome. It localises to the cytoplasmic vesicle. Its subcellular location is the phagosome membrane. The protein resides in the phagosome. The protein localises to the cytoplasmic vesicle membrane. It is found in the melanosome. The enzyme catalyses GTP + H2O = GDP + phosphate + H(+). With respect to regulation, regulated by guanine nucleotide exchange factors (GEFs) which promote the exchange of bound GDP for free GTP. Regulated by GTPase activating proteins (GAPs) which increase the GTP hydrolysis activity. Inhibited by GDP dissociation inhibitors (GDIs). Its function is as follows. The small GTPases Rab are key regulators of intracellular membrane trafficking, from the formation of transport vesicles to their fusion with membranes. Rabs cycle between an inactive GDP-bound form and an active GTP-bound form that is able to recruit to membranes different sets of downstream effectors directly responsible for vesicle formation, movement, tethering and fusion. RAB9A is involved in the transport of proteins between the endosomes and the trans-Golgi network (TGN). Specifically uses NDE1/NDEL1 as an effector to interact with the dynein motor complex in order to control retrograde trafficking of RAB9-associated late endosomes to the TGN. Involved in the recruitment of SGSM2 to melanosomes and is required for the proper trafficking of melanogenic enzymes TYR, TYRP1 and DCT/TYRP2 to melanosomes in melanocytes. This Canis lupus familiaris (Dog) protein is Ras-related protein Rab-9A (RAB9A).